Here is a 284-residue protein sequence, read N- to C-terminus: Diaminopimelate epimerase (284 aa).

Residues asparagine 13 and asparagine 70 each contribute to the substrate site. Cysteine 79 acts as the Proton donor in catalysis. Substrate is bound by residues 80–81 (GN), asparagine 167, asparagine 200, and 218–219 (ER). The active-site Proton acceptor is the cysteine 227. 228–229 (GT) contributes to the substrate binding site.

This sequence belongs to the diaminopimelate epimerase family. Homodimer.

The protein localises to the cytoplasm. The catalysed reaction is (2S,6S)-2,6-diaminopimelate = meso-2,6-diaminopimelate. Its pathway is amino-acid biosynthesis; L-lysine biosynthesis via DAP pathway; DL-2,6-diaminopimelate from LL-2,6-diaminopimelate: step 1/1. In terms of biological role, catalyzes the stereoinversion of LL-2,6-diaminopimelate (L,L-DAP) to meso-diaminopimelate (meso-DAP), a precursor of L-lysine and an essential component of the bacterial peptidoglycan. This Prochlorococcus marinus (strain NATL2A) protein is Diaminopimelate epimerase.